The following is a 270-amino-acid chain: Shikimate dehydrogenase (NADP(+)) (270 aa).

Residues 15–17 (SLS) and Thr62 contribute to the shikimate site. Residue Lys66 is the Proton acceptor of the active site. 2 residues coordinate shikimate: Asn87 and Asp102. NADP(+) contacts are provided by residues 126–130 (GAGGS), 149–154 (NRTVGR), and Ile210. Tyr212 contacts shikimate. Residue Gly233 participates in NADP(+) binding.

Belongs to the shikimate dehydrogenase family. As to quaternary structure, homodimer.

It carries out the reaction shikimate + NADP(+) = 3-dehydroshikimate + NADPH + H(+). It functions in the pathway metabolic intermediate biosynthesis; chorismate biosynthesis; chorismate from D-erythrose 4-phosphate and phosphoenolpyruvate: step 4/7. In terms of biological role, involved in the biosynthesis of the chorismate, which leads to the biosynthesis of aromatic amino acids. Catalyzes the reversible NADPH linked reduction of 3-dehydroshikimate (DHSA) to yield shikimate (SA). In Hyphomonas neptunium (strain ATCC 15444), this protein is Shikimate dehydrogenase (NADP(+)).